A 332-amino-acid polypeptide reads, in one-letter code: Aquaporin-7-2 (332 aa).

Positions 1-40 (MSGQHQITEQPSGNPLSRTSTLIQEKPLTPTSSHAGTQKQ) are enriched in polar residues. Positions 1–46 (MSGQHQITEQPSGNPLSRTSTLIQEKPLTPTSSHAGTQKQPEAPRQ) are disordered. The Cytoplasmic portion of the chain corresponds to 1-66 (MSGQHQITEQ…RHAIRKPMAE (66 aa)). Residues 67 to 87 (FFGVALLIIFGAGSACQVVLS) form a helical membrane-spanning segment. The Extracellular portion of the chain corresponds to 88-100 (TNPDVASSARGSF). Residues 101 to 121 (LSINFGWAIGIAMGVWVSGGI) traverse the membrane as a helical segment. Topologically, residues 122-144 (SGGHINPAITIAMATYRGFPWCK) are cytoplasmic. The short motif at 127 to 129 (NPA) is the NPA 1 element. Residues 145–165 (VPSYILAQVLGGVVGAALVYA) form a helical membrane-spanning segment. Residues 166–199 (NYIHAIDVFEGGHHIRTEATASLFATYALPYMTQ) lie on the Extracellular side of the membrane. Residues 200–220 (ASCFFSEFLATAVLSMMVFAL) traverse the membrane as a helical segment. The Cytoplasmic portion of the chain corresponds to 221-230 (TDKRNHSPTN). The helical transmembrane segment at 231 to 251 (GLLPFALFILFVGLGASLGME) threads the bilayer. At 252-283 (TAYALNPARDFGPRLFLAMAGYGKALFNYRSQ) the chain is on the extracellular side. The short motif at 257-259 (NPA) is the NPA 2 element. The helical transmembrane segment at 284-304 (YWLWAPIIAPVLGAQAGGLLY) threads the bilayer. Residues 305 to 332 (DTFLNDGDNSPIKWRCASSQEQQLAEVV) are Cytoplasmic-facing.

The protein belongs to the MIP/aquaporin (TC 1.A.8) family.

It localises to the membrane. The enzyme catalyses H2O(in) = H2O(out). Functionally, water channel required to facilitate the transport of water across membranes. Does not mediate the transport carbon dioxide across the membrane. The chain is Aquaporin-7-2 from Laccaria bicolor (Bicoloured deceiver).